The primary structure comprises 398 residues: Phosphoglycerate kinase (398 aa).

Residues 23–25 (DFN), R38, 61–64 (HMGK), R122, and R155 contribute to the substrate site. Residues K206, G297, E328, and 354–357 (GGDS) contribute to the ATP site.

This sequence belongs to the phosphoglycerate kinase family. As to quaternary structure, monomer.

It localises to the cytoplasm. The enzyme catalyses (2R)-3-phosphoglycerate + ATP = (2R)-3-phospho-glyceroyl phosphate + ADP. It participates in carbohydrate degradation; glycolysis; pyruvate from D-glyceraldehyde 3-phosphate: step 2/5. This chain is Phosphoglycerate kinase, found in Clostridium botulinum (strain 657 / Type Ba4).